Here is a 400-residue protein sequence, read N- to C-terminus: Elongation factor Tu 2 (400 aa).

One can recognise a tr-type G domain in the interval 10–209; it reads KPHVNIGTIG…KVDEYIPTPQ (200 aa). A G1 region spans residues 19–26; it reads GHVDHGKT. Residue 19 to 26 participates in GTP binding; that stretch reads GHVDHGKT. T26 serves as a coordination point for Mg(2+). Residues 60–64 are G2; sequence GITIN. The tract at residues 81-84 is G3; the sequence is DCPG. GTP is bound by residues 81–85 and 136–139; these read DCPGH and NKAD. The segment at 136–139 is G4; it reads NKAD. Residues 174–176 form a G5 region; that stretch reads SAL.

This sequence belongs to the TRAFAC class translation factor GTPase superfamily. Classic translation factor GTPase family. EF-Tu/EF-1A subfamily. In terms of assembly, monomer.

The protein resides in the cytoplasm. It catalyses the reaction GTP + H2O = GDP + phosphate + H(+). Functionally, GTP hydrolase that promotes the GTP-dependent binding of aminoacyl-tRNA to the A-site of ribosomes during protein biosynthesis. The chain is Elongation factor Tu 2 from Carboxydothermus hydrogenoformans (strain ATCC BAA-161 / DSM 6008 / Z-2901).